A 201-amino-acid chain; its full sequence is IMP cyclohydrolase (201 aa).

The protein belongs to the archaeal IMP cyclohydrolase family.

The enzyme catalyses IMP + H2O = 5-formamido-1-(5-phospho-D-ribosyl)imidazole-4-carboxamide. It functions in the pathway purine metabolism; IMP biosynthesis via de novo pathway; IMP from 5-formamido-1-(5-phospho-D-ribosyl)imidazole-4-carboxamide: step 1/1. Its function is as follows. Catalyzes the cyclization of 5-formylamidoimidazole-4-carboxamide ribonucleotide to IMP. This chain is IMP cyclohydrolase, found in Methanococcus maripaludis (strain C7 / ATCC BAA-1331).